A 440-amino-acid chain; its full sequence is Tumor necrosis factor receptor superfamily member 10B (440 aa).

Disordered regions lie at residues 1 to 32 (MEQR…RPGP) and 60 to 84 (DLAP…CPPG). An N-terminal signal peptide occupies residues 1 to 55 (MEQRGQNAPAASGARKRHGPGPREARGARPGPRVPKTLVLVVAAVLLLVSAESAL). The Extracellular portion of the chain corresponds to 56–210 (ITQQDLAPQQ…SPGTPASPCS (155 aa)). TNFR-Cys repeat units lie at residues 57-94 (TQQD…GRDC), 97-137 (CKYG…NTVC), and 138-178 (QCEE…DIEC). Residues 60–71 (DLAPQQRAAPQQ) are compositionally biased toward low complexity. Intrachain disulfides connect cysteine 81/cysteine 94, cysteine 97/cysteine 113, cysteine 116/cysteine 129, cysteine 119/cysteine 137, cysteine 139/cysteine 153, cysteine 156/cysteine 170, and cysteine 160/cysteine 178. The TAPE repeat unit spans residues 192 to 206 (PAVEETVTSSPGTPA). Residues 211 to 231 (LSGIIIGVTVAAVVLIVAVFV) form a helical membrane-spanning segment. Residues 232–440 (CKSLLWKKVL…LEGNADSAMS (209 aa)) are Cytoplasmic-facing. Positions 339-422 (RQCFDDFADL…LAKQKIEDHL (84 aa)) constitute a Death domain.

In terms of assembly, monomer. Can interact with TRADD and RIPK1. Interacts with HCMV protein UL141; this interaction prevents TNFRSF10B cell surface expression. Two TNFRSF10B monomers interact with a UL141 homodimer. Three TNFRSF10B molecules interact with TNFSF10 homotrimer. In the absence of stimulation, interacts with BIRC2, DDX3X and GSK3B. The interaction with BIRC2 and DDX3X is further enhanced upon receptor stimulation and accompanied by DDX3X and BIRC2 cleavage. In terms of processing, (Microbial infection) Glycosylated on Arg residue by S.typhimurium protein Ssek3. In terms of tissue distribution, widely expressed in adult and fetal tissues; very highly expressed in tumor cell lines such as HeLaS3, K-562, HL-60, SW480, A-549 and G-361; highly expressed in heart, peripheral blood lymphocytes, liver, pancreas, spleen, thymus, prostate, ovary, uterus, placenta, testis, esophagus, stomach and throughout the intestinal tract; not detectable in brain.

Its subcellular location is the membrane. Functionally, receptor for the cytotoxic ligand TNFSF10/TRAIL. The adapter molecule FADD recruits caspase-8 to the activated receptor. The resulting death-inducing signaling complex (DISC) performs caspase-8 proteolytic activation which initiates the subsequent cascade of caspases (aspartate-specific cysteine proteases) mediating apoptosis. Promotes the activation of NF-kappa-B. Essential for ER stress-induced apoptosis. The protein is Tumor necrosis factor receptor superfamily member 10B (TNFRSF10B) of Homo sapiens (Human).